Reading from the N-terminus, the 931-residue chain is MTTGFLQKIFGSRNQRLVKQYQKTVAAINALETQIETLTDDQLRGKTGEFRQRIAAGESLDKLLPEAFAVCREASRRVLKMRHFDVQMIGGMVLHYGKIAEMRTGEGKTLVATLAAYLNALAGRGVHVVTVNDYLAQRDAEWMGRLYNFLGLSVGINLSGMEHDQKQAAYAADITYGTNNEFGFDYLRDNMVYETDSRVQRPLNFAVVDEVDSILIDEARTPLIISGQAEDHTELYVRMNALPPLLERQIGEEKADGTGVEKPGDYTLDEKGRQVFLTESGHEKAERMLAEWGLIGDGESLYAPQNITLMHHVYAALRAHTLFHRDQHYVVQNDEVIIVDEFTGRLMPGRRWSDGLHQAVEAKEHVKIQSENQTLASITFQNYFRMYAKLSGMTGTADTEAYEFNEIYGLETVVIPTNRPPKRIDKQDQIYKTAKERYDAVIRDIRECHERGQPVLVGTTSIENSELLSHLLKQAGLPHEVLNAKQHAREAAIVAEAGRPKRITIATNMAGRGTDIVLGGNVEKQAAFIEADESIPADEKARRIQQLHDEWETLHEQVKTAGGLHIIGTERHESRRIDNQLRGRAGRQGDPGSSRFYLSLEDPLLRIFAGDRVRAIMDRLKMPEGEAIEAGIVTRSIESAQRKVEARNFDIRKQLLEYDDVSNDQRKVIYQQRNELLEAHDIAETIGAMRHGVISEVVRQFVPAGSIEEQWDLPELEETLRNDWQLDLAIQEMVNESSSINADEILDAVTTAADEHYEAKVALVGRESFSAFERSIMLQTLDRLWREHLAALDHLRQGIHLRGYAQKNPKQEYKREAFELFAAMLDAVKQEVTRIVMNVQIQSPEQLEEAAEQIEEQGGQLGNVEFQHADFAAAAAAATAGGAVVADATAEMVGHAMSHSGPAGEVPRVGRNDPCPCGSGKKYKHCHGKLN.

ATP contacts are provided by residues glutamine 87, glycine 105–threonine 109, and aspartate 515. The Zn(2+) site is built by cysteine 915, cysteine 917, cysteine 926, and histidine 927.

The protein belongs to the SecA family. Monomer and homodimer. Part of the essential Sec protein translocation apparatus which comprises SecA, SecYEG and auxiliary proteins SecDF-YajC and YidC. It depends on Zn(2+) as a cofactor.

The protein localises to the cell inner membrane. It localises to the cytoplasm. It carries out the reaction ATP + H2O + cellular proteinSide 1 = ADP + phosphate + cellular proteinSide 2.. Functionally, part of the Sec protein translocase complex. Interacts with the SecYEG preprotein conducting channel. Has a central role in coupling the hydrolysis of ATP to the transfer of proteins into and across the cell membrane, serving both as a receptor for the preprotein-SecB complex and as an ATP-driven molecular motor driving the stepwise translocation of polypeptide chains across the membrane. This chain is Protein translocase subunit SecA, found in Burkholderia pseudomallei (strain K96243).